The following is a 498-amino-acid chain: Actin-binding protein WASF2 (498 aa).

2 disordered regions span residues 173-203 (KEKRKHRKEKKDNPNRGNVNPRKIKTRKEEW) and 240-435 (NVDA…AVSD). A compositionally biased stretch (low complexity) spans 252 to 263 (SDSASSPSPSFS). The span at 298–407 (SHPPPAPPLG…PPPGPPPPPF (110 aa)) shows a compositional bias: pro residues. The 18-residue stretch at 436 to 453 (ARSDLLSAIRQGFQLRRV) folds into the WH2 domain. A Phosphoserine modification is found at serine 474.

This sequence belongs to the SCAR/WAVE family. Binds actin and the Arp2/3 complex. Interacts with BAIAP2. Component of the WAVE2 complex composed of ABI1, CYFIP1/SRA1, NCKAP1/NAP1 (NCKAP1l/HEM1 in hematopoietic cells) and WASF2/WAVE2. Directly interacts with BRK1. Interacts with FNBP1L (via the SH3 domain). In terms of assembly, (Microbial infection) Interacts with human cytomegalovirus protein UL135. As to expression, expressed in all tissues with strongest expression in placenta, lung, and peripheral blood leukocytes, but not in skeletal muscle.

The protein localises to the cytoplasm. The protein resides in the cytoskeleton. It localises to the cell projection. Its subcellular location is the lamellipodium. It is found in the basolateral cell membrane. Functionally, downstream effector molecule involved in the transmission of signals from tyrosine kinase receptors and small GTPases to the actin cytoskeleton. Promotes formation of actin filaments. Part of the WAVE complex that regulates lamellipodia formation. The WAVE complex regulates actin filament reorganization via its interaction with the Arp2/3 complex. In Homo sapiens (Human), this protein is Actin-binding protein WASF2.